The sequence spans 206 residues: Small ribosomal subunit protein uS4 (206 aa).

Residues 96–156 (QRLDNVVYRM…EKSKTQARII (61 aa)) enclose the S4 RNA-binding domain.

Belongs to the universal ribosomal protein uS4 family. Part of the 30S ribosomal subunit. Contacts protein S5. The interaction surface between S4 and S5 is involved in control of translational fidelity.

Its function is as follows. One of the primary rRNA binding proteins, it binds directly to 16S rRNA where it nucleates assembly of the body of the 30S subunit. With S5 and S12 plays an important role in translational accuracy. This Pseudoalteromonas translucida (strain TAC 125) protein is Small ribosomal subunit protein uS4.